A 358-amino-acid chain; its full sequence is B3 domain-containing transcription factor NGA3 (358 aa).

Residues 1-14 (MDLSLAPTTTTSSD) show a composition bias toward polar residues. Residues 1–45 (MDLSLAPTTTTSSDQEQDRDQELTSNIGASSSSGPSGNNNNLPMM) are disordered. Residues 25-45 (SNIGASSSSGPSGNNNNLPMM) are compositionally biased toward low complexity. The segment at residues 56 to 162 (FDKVVTPSDV…KLYIDWRHRP (107 aa)) is a DNA-binding region (TF-B3). The tract at residues 310 to 358 (EIGASSSSSSALRLNLSTDHDDDNDDGDDGDDDQFAKKGKSSLSLNFNP) is disordered. Residues 329–342 (HDDDNDDGDDGDDD) are compositionally biased toward acidic residues.

The protein localises to the nucleus. Regulates lateral organ growth. Functionally redundant with NGA1, NGA2 and NGA4. In Arabidopsis thaliana (Mouse-ear cress), this protein is B3 domain-containing transcription factor NGA3 (NGA3).